Reading from the N-terminus, the 408-residue chain is Inhibin beta B chain (408 aa).

A signal peptide spans 1 to 28 (MDGLPGRALGAACLLMLAVGSLGPGVWG). Positions 29–60 (SPTPPPLPAAPQPPPPPPGAPGGSQDTCTSCG) are disordered. Residues 29-293 (SPTPPPLPAA…GDSRHRIRKR (265 aa)) constitute a propeptide that is removed on maturation. Residues 30–48 (PTPPPLPAAPQPPPPPPGA) show a composition bias toward pro residues. N-linked (GlcNAc...) asparagine glycosylation occurs at N94. Disulfide bonds link C297-C305, C304-C373, C333-C405, and C337-C407.

Belongs to the TGF-beta family. In terms of assembly, dimeric, linked by one or more disulfide bonds. Inhibin B is a dimer of alpha and beta-B. Activin B is a homodimer of beta-B. Activin AB is a dimer of beta-A and beta-B. Interacts with FST and FSTL3.

It localises to the secreted. Its function is as follows. Inhibins and activins inhibit and activate, respectively, the secretion of follitropin by the pituitary gland. Inhibins/activins are involved in regulating a number of diverse functions such as hypothalamic and pituitary hormone secretion, gonadal hormone secretion, germ cell development and maturation, erythroid differentiation, insulin secretion, nerve cell survival, embryonic axial development or bone growth, depending on their subunit composition. Inhibins appear to oppose the functions of activins. Activin B is a dimer of alpha and beta-B that plays a role in several essential biological processes including embryonic development, stem cell maintenance and differentiation, haematopoiesis, cell proliferation and wound healing. Signals through type I receptor ACVR1C, abundantly expressed in pancreatic beta cells, and type II receptors like ACVR2A. Upon ligand binding, these receptors phosphorylate intracellular signaling mediators SMAD2 and SMAD3, which form a complex with SMAD4, translocate to the nucleus, and regulate gene expression. Plays a crucial role in the induction of hepcidin by inflammation through activation of ACVR1C and subsequent phosphorylation of SMAD1/5/8. Regulates adipocyte lipid metabolism by decreasing non-esterified fatty acids and glycerol release and increases intracellular triglyceride content. Stimulates wound healing by promoting cell migration and hair follicle regeneration through the JNK and ERK signaling pathways downstream of RHOA. In terms of biological role, inhibin B is a dimer of alpha and beta-B that plays a crucial role in the regulation of the reproductive system by inhibiting the secretion of follicle-stimulating hormone (FSH) from the anterior pituitary gland. Thereby, maintains reproductive homeostasis in both males and females. Acts as a more potent suppressor of FSH release than inhibin A. Functions as competitive receptor antagonist binding activin type II receptors with high affinity in the presence of the TGF-beta type III coreceptor/TGFBR3L. The polypeptide is Inhibin beta B chain (INHBB) (Bos taurus (Bovine)).